The following is a 359-amino-acid chain: Aminomethyltransferase (359 aa).

It belongs to the GcvT family. The glycine cleavage system is composed of four proteins: P, T, L and H.

It carries out the reaction N(6)-[(R)-S(8)-aminomethyldihydrolipoyl]-L-lysyl-[protein] + (6S)-5,6,7,8-tetrahydrofolate = N(6)-[(R)-dihydrolipoyl]-L-lysyl-[protein] + (6R)-5,10-methylene-5,6,7,8-tetrahydrofolate + NH4(+). In terms of biological role, the glycine cleavage system catalyzes the degradation of glycine. The sequence is that of Aminomethyltransferase from Alcanivorax borkumensis (strain ATCC 700651 / DSM 11573 / NCIMB 13689 / SK2).